We begin with the raw amino-acid sequence, 209 residues long: E3 ubiquitin-protein ligase RNF138 (209 aa).

The RING-type zinc-finger motif lies at 18 to 58; the sequence is CPVCQEVLKTPVRTAACQHVFCRKCFLTAMRESGIHCPLCR. Zn(2+) is bound by residues cysteine 86, cysteine 89, histidine 101, and cysteine 105. A C2HC RNF-type zinc finger spans residues 86 to 105; that stretch reads CRCCSKKIKFYRMRHHYKSC. The tract at residues 125 to 154 is disordered; the sequence is QDSVRSSNRSETSASDNTETYQEDTSSSGH. Threonine 142 carries the post-translational modification Phosphothreonine. The C2H2-type zinc-finger motif lies at 157-180; the sequence is FKCPLCQESNFTRQRLLDHCNSNH. One can recognise a UIM domain in the interval 189-207; the sequence is LQLDEETQYQTAVEESFQV.

Interacts with NLK. Interacts with XRCC5/Ku80. Interacts with RBBP8/CtIP. In terms of processing, auto-ubiquitinated.

It localises to the chromosome. It catalyses the reaction S-ubiquitinyl-[E2 ubiquitin-conjugating enzyme]-L-cysteine + [acceptor protein]-L-lysine = [E2 ubiquitin-conjugating enzyme]-L-cysteine + N(6)-ubiquitinyl-[acceptor protein]-L-lysine.. It functions in the pathway protein modification; protein ubiquitination. Functionally, E3 ubiquitin-protein ligase involved in DNA damage response by promoting DNA resection and homologous recombination. Recruited to sites of double-strand breaks following DNA damage and specifically promotes double-strand break repair via homologous recombination. Two different, non-exclusive, mechanisms have been proposed. According to a report, regulates the choice of double-strand break repair by favoring homologous recombination over non-homologous end joining (NHEJ): acts by mediating ubiquitination of XRCC5/Ku80, leading to remove the Ku complex from DNA breaks, thereby promoting homologous recombination. According to another report, cooperates with UBE2Ds E2 ubiquitin ligases (UBE2D1, UBE2D2, UBE2D3 or UBE2D4) to promote homologous recombination by mediating ubiquitination of RBBP8/CtIP. Together with NLK, involved in the ubiquitination and degradation of TCF/LEF. Also exhibits auto-ubiquitination activity in combination with UBE2K. May act as a negative regulator in the Wnt/beta-catenin-mediated signaling pathway. In Rattus norvegicus (Rat), this protein is E3 ubiquitin-protein ligase RNF138.